The primary structure comprises 475 residues: tRNA modification GTPase MnmE (475 aa).

Positions 32, 97, and 136 each coordinate (6S)-5-formyl-5,6,7,8-tetrahydrofolate. The TrmE-type G domain maps to 232 to 396; that stretch reads GVATVIAGRP…LKSRMSSMVE (165 aa). Residues 242–247, 261–267, 286–289, and 377–379 contribute to the GTP site; these read NAGKST, SHMPGTT, DTAG, and SAR. Mg(2+) contacts are provided by S246 and T267. K475 serves as a coordination point for (6S)-5-formyl-5,6,7,8-tetrahydrofolate.

It belongs to the TRAFAC class TrmE-Era-EngA-EngB-Septin-like GTPase superfamily. TrmE GTPase family. As to quaternary structure, homodimer. Heterotetramer of two MnmE and two MnmG subunits. K(+) serves as cofactor.

It is found in the cytoplasm. Functionally, exhibits a very high intrinsic GTPase hydrolysis rate. Involved in the addition of a carboxymethylaminomethyl (cmnm) group at the wobble position (U34) of certain tRNAs, forming tRNA-cmnm(5)s(2)U34. The polypeptide is tRNA modification GTPase MnmE (Chlorobium phaeobacteroides (strain DSM 266 / SMG 266 / 2430)).